The chain runs to 702 residues: Cadmium, zinc and cobalt-transporting ATPase (702 aa).

Topologically, residues 1–86 (MRLVKQEYVL…HIKKSADDGY (86 aa)) are cytoplasmic. Residues 4–72 (VKQEYVLDGL…KVKSIDPHVT (69 aa)) form the HMA domain. Cysteine 15 and cysteine 18 together coordinate Cd(2+). Co(2+)-binding residues include cysteine 15 and cysteine 18. Residues cysteine 15 and cysteine 18 each coordinate Zn(2+). The helical transmembrane segment at 87–107 (RNRMVNMLIRMAAAVILGAAA) threads the bilayer. At 108 to 116 (YLVQSGTIE) the chain is on the extracellular side. A helical transmembrane segment spans residues 117–136 (FFLFLGAYLIIGGDIIIRAV). Topologically, residues 137 to 143 (KNIIRGQ) are cytoplasmic. A helical membrane pass occupies residues 144 to 163 (VFDEHFLMALATIGAFLIQQ). At 164-166 (YPE) the chain is on the extracellular side. A helical membrane pass occupies residues 167-186 (GVAVMLFYQIGELFQGAAVS). Residues 187–320 (RSRKSISALM…ITKFAKYYTP (134 aa)) lie on the Cytoplasmic side of the membrane. A helical transmembrane segment spans residues 321-339 (AVVIIAVLLAFVPPLVLSG). Residues 340 to 345 (AALSDW) lie on the Extracellular side of the membrane. The helical transmembrane segment at 346–363 (VYRALIFLVISCPCALVV) threads the bilayer. The Cytoplasmic segment spans residues 364-648 (SIPLGFFGGI…AIRIAKRTRR (285 aa)). The 4-aspartylphosphate intermediate role is filled by aspartate 401. Aspartate 595 and aspartate 599 together coordinate Mg(2+). A helical membrane pass occupies residues 649 to 670 (IVWQNIGFALGVKAIFLILGAF). The Extracellular segment spans residues 671–678 (GIATMWEA). Residues 679-694 (VFSDVGVTLLAVANAM) form a helical membrane-spanning segment. Over 695 to 702 (RVMRLKNK) the chain is Cytoplasmic.

This sequence belongs to the cation transport ATPase (P-type) (TC 3.A.3) family. Type IB subfamily.

It localises to the cell membrane. It carries out the reaction Zn(2+)(in) + ATP + H2O = Zn(2+)(out) + ADP + phosphate + H(+). The catalysed reaction is Cd(2+)(in) + ATP + H2O = Cd(2+)(out) + ADP + phosphate + H(+). Couples the hydrolysis of ATP with the transport of cadmium, zinc and cobalt out of the cell. Does not seem to transport copper. The polypeptide is Cadmium, zinc and cobalt-transporting ATPase (cadA) (Bacillus subtilis (strain 168)).